The following is an 879-amino-acid chain: Alanine--tRNA ligase (879 aa).

Histidine 566, histidine 570, cysteine 668, and histidine 672 together coordinate Zn(2+).

Belongs to the class-II aminoacyl-tRNA synthetase family. The cofactor is Zn(2+).

The protein resides in the cytoplasm. The enzyme catalyses tRNA(Ala) + L-alanine + ATP = L-alanyl-tRNA(Ala) + AMP + diphosphate. Catalyzes the attachment of alanine to tRNA(Ala) in a two-step reaction: alanine is first activated by ATP to form Ala-AMP and then transferred to the acceptor end of tRNA(Ala). Also edits incorrectly charged Ser-tRNA(Ala) and Gly-tRNA(Ala) via its editing domain. This Clostridium botulinum (strain Hall / ATCC 3502 / NCTC 13319 / Type A) protein is Alanine--tRNA ligase.